A 74-amino-acid chain; its full sequence is Putative defensin-like protein 36 (74 aa).

Residues 1-22 form the signal peptide; that stretch reads MASNKVSFFLVLCLCILLAGEC. Disulfide bonds link Cys33–Cys59, Cys45–Cys69, and Cys49–Cys71.

It belongs to the DEFL family.

Its subcellular location is the secreted. The polypeptide is Putative defensin-like protein 36 (Arabidopsis thaliana (Mouse-ear cress)).